Consider the following 173-residue polypeptide: dCTP deaminase, dUMP-forming (173 aa).

Residues 93-98 (RSSIGR), Asp111, 119-121 (TLE), Gln138, and Tyr151 contribute to the dCTP site. Catalysis depends on Glu121, which acts as the Proton donor/acceptor.

This sequence belongs to the dCTP deaminase family. Homotrimer.

The catalysed reaction is dCTP + 2 H2O = dUMP + NH4(+) + diphosphate. It participates in pyrimidine metabolism; dUMP biosynthesis; dUMP from dCTP: step 1/1. Bifunctional enzyme that catalyzes both the deamination of dCTP to dUTP and the hydrolysis of dUTP to dUMP without releasing the toxic dUTP intermediate. This chain is dCTP deaminase, dUMP-forming, found in Clostridium acetobutylicum (strain ATCC 824 / DSM 792 / JCM 1419 / IAM 19013 / LMG 5710 / NBRC 13948 / NRRL B-527 / VKM B-1787 / 2291 / W).